The following is a 396-amino-acid chain: Ribosomal RNA large subunit methyltransferase I (396 aa).

Residues 2–81 enclose the PUA domain; sequence TVRLILAKGR…EVIDCAFFIR (80 aa).

It belongs to the methyltransferase superfamily. RlmI family.

Its subcellular location is the cytoplasm. It catalyses the reaction cytidine(1962) in 23S rRNA + S-adenosyl-L-methionine = 5-methylcytidine(1962) in 23S rRNA + S-adenosyl-L-homocysteine + H(+). Its function is as follows. Specifically methylates the cytosine at position 1962 (m5C1962) of 23S rRNA. In Yersinia pseudotuberculosis serotype O:1b (strain IP 31758), this protein is Ribosomal RNA large subunit methyltransferase I.